The chain runs to 153 residues: Transcriptional repressor NrdR 3 (153 aa).

A disordered region spans residues 1-26 (MRCPFCGHDDTQVKDSRPTEDNSAIR). The segment at 3–34 (CPFCGHDDTQVKDSRPTEDNSAIRRRRSCPEC) is a zinc-finger region. The segment covering 7–24 (GHDDTQVKDSRPTEDNSA) has biased composition (basic and acidic residues). Positions 49-139 (LVVIKKDGGR…VYRNFREAKD (91 aa)) constitute an ATP-cone domain.

The protein belongs to the NrdR family. Zn(2+) is required as a cofactor.

In terms of biological role, negatively regulates transcription of bacterial ribonucleotide reductase nrd genes and operons by binding to NrdR-boxes. This Paramagnetospirillum magneticum (strain ATCC 700264 / AMB-1) (Magnetospirillum magneticum) protein is Transcriptional repressor NrdR 3.